The sequence spans 185 residues: Ribosome-recycling factor (185 aa).

Residues 163–185 form a disordered region; it reads LTNEATKKIDAISKDKEKEITEG. A compositionally biased stretch (basic and acidic residues) spans 167 to 185; sequence ATKKIDAISKDKEKEITEG.

It belongs to the RRF family.

It is found in the cytoplasm. Its function is as follows. Responsible for the release of ribosomes from messenger RNA at the termination of protein biosynthesis. May increase the efficiency of translation by recycling ribosomes from one round of translation to another. The chain is Ribosome-recycling factor from Latilactobacillus sakei subsp. sakei (strain 23K) (Lactobacillus sakei subsp. sakei).